Reading from the N-terminus, the 339-residue chain is Beta-ketoacyl-[acyl-carrier-protein] synthase III (339 aa).

Active-site residues include C119 and H262. Positions 263–267 (QANQR) are ACP-binding. Residue N292 is part of the active site.

Belongs to the thiolase-like superfamily. FabH family. In terms of assembly, homodimer.

The protein resides in the cytoplasm. The enzyme catalyses malonyl-[ACP] + acetyl-CoA + H(+) = 3-oxobutanoyl-[ACP] + CO2 + CoA. Its pathway is lipid metabolism; fatty acid biosynthesis. Functionally, catalyzes the condensation reaction of fatty acid synthesis by the addition to an acyl acceptor of two carbons from malonyl-ACP. Catalyzes the first condensation reaction which initiates fatty acid synthesis and may therefore play a role in governing the total rate of fatty acid production. Possesses both acetoacetyl-ACP synthase and acetyl transacylase activities. Its substrate specificity determines the biosynthesis of branched-chain and/or straight-chain of fatty acids. The chain is Beta-ketoacyl-[acyl-carrier-protein] synthase III from Prochlorococcus marinus (strain MIT 9313).